Reading from the N-terminus, the 128-residue chain is 3-aminoacrylate deaminase RutC (128 aa).

Belongs to the RutC family. In terms of assembly, homotrimer.

The catalysed reaction is (Z)-3-aminoacrylate + H2O + H(+) = 3-oxopropanoate + NH4(+). In terms of biological role, involved in pyrimidine catabolism. Catalyzes the deamination of 3-aminoacrylate to malonic semialdehyde, a reaction that can also occur spontaneously. RutC may facilitate the reaction and modulate the metabolic fitness, rather than catalyzing essential functions. This Shigella flexneri serotype X (strain 2002017) protein is 3-aminoacrylate deaminase RutC.